Reading from the N-terminus, the 447-residue chain is N-succinylarginine dihydrolase (447 aa).

Residues 19–28 (AGLSFGNEAS), Asn-110, and 137–138 (HR) contribute to the substrate site. Glu-174 is an active-site residue. Arg-213 lines the substrate pocket. His-249 is a catalytic residue. Substrate-binding residues include Asp-251 and Asn-364. The Nucleophile role is filled by Cys-370.

It belongs to the succinylarginine dihydrolase family. Homodimer.

It catalyses the reaction N(2)-succinyl-L-arginine + 2 H2O + 2 H(+) = N(2)-succinyl-L-ornithine + 2 NH4(+) + CO2. Its pathway is amino-acid degradation; L-arginine degradation via AST pathway; L-glutamate and succinate from L-arginine: step 2/5. In terms of biological role, catalyzes the hydrolysis of N(2)-succinylarginine into N(2)-succinylornithine, ammonia and CO(2). The sequence is that of N-succinylarginine dihydrolase from Yersinia pseudotuberculosis serotype O:1b (strain IP 31758).